The sequence spans 359 residues: Protein HEXIM1 (359 aa).

Residues methionine 1 to histidine 163 form a disordered region. The span at tyrosine 9–threonine 19 shows a compositional bias: polar residues. Basic and acidic residues-rich tracts occupy residues proline 34 to tryptophan 47 and cysteine 84 to asparagine 93. Phosphoserine is present on residues serine 97 and serine 98. Basic residues predominate over residues leucine 148–histidine 163. The segment at lysine 150–lysine 177 is basic region; mediates nuclear localization and interaction with 7SK snRNA and NR3C1. An interaction with P-TEFb region spans residues proline 202 to threonine 205. Residues methionine 210 to glycine 250 form an autoinhibitory acidic region; in absence of 7SK snRNA interacts with the basic region preventing interaction with P-TEFb and modulating subcellular localization region. A disordered region spans residues histidine 213–phenylalanine 262. Phosphoserine is present on serine 233. Phosphothreonine is present on threonine 236. Residues threonine 236 to glycine 251 show a composition bias toward acidic residues. 3 positions are modified to phosphoserine: serine 237, serine 252, and serine 260. The stretch at serine 283–glutamine 349 forms a coiled coil. The segment at glutamate 286 to arginine 314 is mediates interaction with CCNT1. A required for inhibition of ESR1-dependent transcription region spans residues leucine 310–serine 355.

Belongs to the HEXIM family. In terms of assembly, homooligomer and heterooligomer with HEXIM2; probably dimeric. Core component of the 7SK RNP complex, at least composed of 7SK RNA, LARP7, MEPCE, HEXIM1 (or HEXIM2) and P-TEFb (composed of CDK9 and CCNT1/cyclin-T1). Interacts with the N-CoR complex through NCOR1. Interacts with ESR1 and NR3C1. May interact with NF-kappa-B through RELA. Interacts with CCNT2; mediates formation of a tripartite complex with KPNA2. Part of the HDP-RNP complex composed of at least HEXIM1, PRKDC, XRCC5, XRCC6, paraspeckle proteins (SFPQ, NONO, PSPC1, RBM14, and MATR3) and NEAT1 non-coding RNA. Ubiquitously expressed with higher expression in placenta. HEXIM1 and HEXIM2 are differentially expressed. Expressed in endocrine tissues.

The protein resides in the nucleus. It is found in the cytoplasm. In terms of biological role, transcriptional regulator which functions as a general RNA polymerase II transcription inhibitor. Core component of the 7SK RNP complex: in cooperation with 7SK snRNA sequesters P-TEFb in a large inactive 7SK snRNP complex preventing RNA polymerase II phosphorylation and subsequent transcriptional elongation. May also regulate NF-kappa-B, ESR1, NR3C1 and CIITA-dependent transcriptional activity. Plays a role in the regulation of DNA virus-mediated innate immune response by assembling into the HDP-RNP complex, a complex that serves as a platform for IRF3 phosphorylation and subsequent innate immune response activation through the cGAS-STING pathway. In Homo sapiens (Human), this protein is Protein HEXIM1 (HEXIM1).